The primary structure comprises 604 residues: NADP-dependent malic enzyme, mitochondrial (604 aa).

The segment at 29 to 50 is disordered; it reads APAQGCHSKPGPARPVPLKKRG. The Proton donor role is filled by Tyr-137. Arg-190 contributes to the NAD(+) binding site. Lys-208 (proton acceptor) is an active-site residue. Residues Glu-280, Asp-281, and Asp-304 each coordinate a divalent metal cation. Asp-304 contributes to the NAD(+) binding site. Phosphoserine is present on Ser-371. NAD(+) is bound at residue Asn-443.

It belongs to the malic enzymes family. Requires Mg(2+) as cofactor. Mn(2+) is required as a cofactor. As to expression, expressed predominantly in organs with a low-division rate.

The protein resides in the mitochondrion matrix. It catalyses the reaction (S)-malate + NADP(+) = pyruvate + CO2 + NADPH. It carries out the reaction oxaloacetate + H(+) = pyruvate + CO2. Catalyzes the oxidative decarboxylation of (S)-malate to pyruvate using NADP(+) as a cofactor. Can also reverse the decarboxylation reaction, but only with significantly lower efficiency. The chain is NADP-dependent malic enzyme, mitochondrial from Homo sapiens (Human).